Here is a 428-residue protein sequence, read N- to C-terminus: Enolase (428 aa).

A (2R)-2-phosphoglycerate-binding site is contributed by Q163. E205 acts as the Proton donor in catalysis. D242, E286, and D313 together coordinate Mg(2+). (2R)-2-phosphoglycerate contacts are provided by K338, R367, S368, and K389. K338 serves as the catalytic Proton acceptor.

This sequence belongs to the enolase family. The cofactor is Mg(2+).

Its subcellular location is the cytoplasm. It is found in the secreted. The protein resides in the cell surface. It carries out the reaction (2R)-2-phosphoglycerate = phosphoenolpyruvate + H2O. Its pathway is carbohydrate degradation; glycolysis; pyruvate from D-glyceraldehyde 3-phosphate: step 4/5. In terms of biological role, catalyzes the reversible conversion of 2-phosphoglycerate (2-PG) into phosphoenolpyruvate (PEP). It is essential for the degradation of carbohydrates via glycolysis. This is Enolase from Lactobacillus acidophilus (strain ATCC 700396 / NCK56 / N2 / NCFM).